A 488-amino-acid chain; its full sequence is Multidrug resistance outer membrane protein MdtP (488 aa).

Positions Met-1–Gly-23 are cleaved as a signal peptide. Cys-24 carries N-palmitoyl cysteine lipidation. A lipid anchor (S-diacylglycerol cysteine) is attached at Cys-24.

The protein belongs to the outer membrane factor (OMF) (TC 1.B.17) family. Could be part of a tripartite efflux system composed of MdtN, MdtO and MdtP.

Its subcellular location is the cell outer membrane. Could be involved in resistance to puromycin, acriflavine and tetraphenylarsonium chloride. This is Multidrug resistance outer membrane protein MdtP (mdtP) from Escherichia coli O157:H7.